Reading from the N-terminus, the 364-residue chain is Putative protein C31H2.4 (364 aa).

2 consecutive VOC domains span residues 6-134 and 161-320; these read AIHH…LGEF and LMDH…IFSK. The Fe cation site is built by His164, His248, and Glu331.

The protein belongs to the 4HPPD family. Requires Fe cation as cofactor.

This is Putative protein C31H2.4 from Caenorhabditis elegans.